Here is a 45-residue protein sequence, read N- to C-terminus: Large ribosomal subunit protein bL34 (45 aa).

This sequence belongs to the bacterial ribosomal protein bL34 family.

The protein is Large ribosomal subunit protein bL34 (rpmH) of Streptomyces bikiniensis.